Consider the following 555-residue polypeptide: Glucose-6-phosphate isomerase (555 aa).

Glutamate 356 (proton donor) is an active-site residue. Residues histidine 387 and lysine 515 contribute to the active site.

The protein belongs to the GPI family.

The protein resides in the cytoplasm. The catalysed reaction is alpha-D-glucose 6-phosphate = beta-D-fructose 6-phosphate. It functions in the pathway carbohydrate biosynthesis; gluconeogenesis. The protein operates within carbohydrate degradation; glycolysis; D-glyceraldehyde 3-phosphate and glycerone phosphate from D-glucose: step 2/4. Catalyzes the reversible isomerization of glucose-6-phosphate to fructose-6-phosphate. In Desulforapulum autotrophicum (strain ATCC 43914 / DSM 3382 / VKM B-1955 / HRM2) (Desulfobacterium autotrophicum), this protein is Glucose-6-phosphate isomerase.